The following is a 124-amino-acid chain: Small ribosomal subunit protein uS12c (124 aa).

Residues 104–124 (SGGVKDRTQRRSKYGVKKPKS) form a disordered region. Basic residues predominate over residues 113–124 (RRSKYGVKKPKS).

Belongs to the universal ribosomal protein uS12 family. As to quaternary structure, part of the 30S ribosomal subunit.

The protein localises to the plastid. It localises to the chloroplast. Its function is as follows. With S4 and S5 plays an important role in translational accuracy. Located at the interface of the 30S and 50S subunits. In Thalassiosira pseudonana (Marine diatom), this protein is Small ribosomal subunit protein uS12c (rps12).